We begin with the raw amino-acid sequence, 440 residues long: UDP-N-acetylglucosamine 1-carboxyvinyltransferase 1 (440 aa).

A phosphoenolpyruvate-binding site is contributed by 22-23 (KN). Arg93 contacts UDP-N-acetyl-alpha-D-glucosamine. Catalysis depends on Cys117, which acts as the Proton donor. Cys117 bears the 2-(S-cysteinyl)pyruvic acid O-phosphothioketal mark. Residues 122–126 (RPIDQ), Asp306, and Val328 contribute to the UDP-N-acetyl-alpha-D-glucosamine site.

It belongs to the EPSP synthase family. MurA subfamily.

Its subcellular location is the cytoplasm. The enzyme catalyses phosphoenolpyruvate + UDP-N-acetyl-alpha-D-glucosamine = UDP-N-acetyl-3-O-(1-carboxyvinyl)-alpha-D-glucosamine + phosphate. It participates in cell wall biogenesis; peptidoglycan biosynthesis. Its function is as follows. Cell wall formation. Adds enolpyruvyl to UDP-N-acetylglucosamine. This Halalkalibacterium halodurans (strain ATCC BAA-125 / DSM 18197 / FERM 7344 / JCM 9153 / C-125) (Bacillus halodurans) protein is UDP-N-acetylglucosamine 1-carboxyvinyltransferase 1.